The chain runs to 106 residues: Venom family 8-like peptide Pr8a (106 aa).

The signal sequence occupies residues 1-17 (MSPIAFLLPFLLQMVLS).

Post-translationally, contains 2 disulfide bonds. Expressed by the venom gland (anterior main gland) (at protein level).

Its subcellular location is the secreted. In Platymeris rhadamanthus (Red spot assassin bug), this protein is Venom family 8-like peptide Pr8a.